The chain runs to 451 residues: Chromosomal replication initiator protein DnaA (451 aa).

The interval 1 to 73 (MQDNLPQIWE…SNALKQTTSK (73 aa)) is domain I, interacts with DnaA modulators. A domain II region spans residues 73-113 (KNFEIRFIVPSEEKISKTEESQKKLEGSVNISVASDQFVSN). Positions 114–330 (NLNPKYTFDT…GALIRIVAYS (217 aa)) are domain III, AAA+ region. ATP contacts are provided by Gly158, Gly160, Lys161, and Thr162. Positions 331 to 451 (SLTNSEITVE…ERIAKEIKGD (121 aa)) are domain IV, binds dsDNA.

The protein belongs to the DnaA family. As to quaternary structure, oligomerizes as a right-handed, spiral filament on DNA at oriC.

The protein resides in the cytoplasm. Plays an essential role in the initiation and regulation of chromosomal replication. ATP-DnaA binds to the origin of replication (oriC) to initiate formation of the DNA replication initiation complex once per cell cycle. Binds the DnaA box (a 9 base pair repeat at the origin) and separates the double-stranded (ds)DNA. Forms a right-handed helical filament on oriC DNA; dsDNA binds to the exterior of the filament while single-stranded (ss)DNA is stabiized in the filament's interior. The ATP-DnaA-oriC complex binds and stabilizes one strand of the AT-rich DNA unwinding element (DUE), permitting loading of DNA polymerase. After initiation quickly degrades to an ADP-DnaA complex that is not apt for DNA replication. Binds acidic phospholipids. In Alkaliphilus oremlandii (strain OhILAs) (Clostridium oremlandii (strain OhILAs)), this protein is Chromosomal replication initiator protein DnaA.